The sequence spans 361 residues: Histidinol-phosphate aminotransferase (361 aa).

The residue at position 221 (lysine 221) is an N6-(pyridoxal phosphate)lysine.

Belongs to the class-II pyridoxal-phosphate-dependent aminotransferase family. Histidinol-phosphate aminotransferase subfamily. Pyridoxal 5'-phosphate is required as a cofactor.

The catalysed reaction is L-histidinol phosphate + 2-oxoglutarate = 3-(imidazol-4-yl)-2-oxopropyl phosphate + L-glutamate. It participates in amino-acid biosynthesis; L-histidine biosynthesis; L-histidine from 5-phospho-alpha-D-ribose 1-diphosphate: step 7/9. The chain is Histidinol-phosphate aminotransferase from Methanocella arvoryzae (strain DSM 22066 / NBRC 105507 / MRE50).